The chain runs to 729 residues: Phosphoribosylformylglycinamidine synthase subunit PurL (729 aa).

Residue His-54 is part of the active site. ATP is bound by residues Tyr-57 and Lys-96. Mg(2+) is bound at residue Glu-98. Substrate-binding positions include 99–102 (SHNH) and Arg-121. The Proton acceptor role is filled by His-100. Asp-122 serves as a coordination point for Mg(2+). Gln-245 contacts substrate. Asp-273 contributes to the Mg(2+) binding site. 317–319 (ETQ) provides a ligand contact to substrate. Residues Asp-495 and Gly-532 each contribute to the ATP site. Asn-533 contacts Mg(2+). Ser-535 provides a ligand contact to substrate.

It belongs to the FGAMS family. Monomer. Part of the FGAM synthase complex composed of 1 PurL, 1 PurQ and 2 PurS subunits.

It is found in the cytoplasm. It carries out the reaction N(2)-formyl-N(1)-(5-phospho-beta-D-ribosyl)glycinamide + L-glutamine + ATP + H2O = 2-formamido-N(1)-(5-O-phospho-beta-D-ribosyl)acetamidine + L-glutamate + ADP + phosphate + H(+). It participates in purine metabolism; IMP biosynthesis via de novo pathway; 5-amino-1-(5-phospho-D-ribosyl)imidazole from N(2)-formyl-N(1)-(5-phospho-D-ribosyl)glycinamide: step 1/2. Its function is as follows. Part of the phosphoribosylformylglycinamidine synthase complex involved in the purines biosynthetic pathway. Catalyzes the ATP-dependent conversion of formylglycinamide ribonucleotide (FGAR) and glutamine to yield formylglycinamidine ribonucleotide (FGAM) and glutamate. The FGAM synthase complex is composed of three subunits. PurQ produces an ammonia molecule by converting glutamine to glutamate. PurL transfers the ammonia molecule to FGAR to form FGAM in an ATP-dependent manner. PurS interacts with PurQ and PurL and is thought to assist in the transfer of the ammonia molecule from PurQ to PurL. The sequence is that of Phosphoribosylformylglycinamidine synthase subunit PurL from Staphylococcus haemolyticus (strain JCSC1435).